Consider the following 905-residue polypeptide: Protein translocase subunit SecA (905 aa).

Residues Gln87, 105-109 (GEGKT), and Asp509 contribute to the ATP site. Zn(2+) is bound by residues Cys890, Cys892, Cys901, and His902.

It belongs to the SecA family. Monomer and homodimer. Part of the essential Sec protein translocation apparatus which comprises SecA, SecYEG and auxiliary proteins SecDF-YajC and YidC. Zn(2+) is required as a cofactor.

The protein localises to the cell inner membrane. Its subcellular location is the cytoplasm. The catalysed reaction is ATP + H2O + cellular proteinSide 1 = ADP + phosphate + cellular proteinSide 2.. Its function is as follows. Part of the Sec protein translocase complex. Interacts with the SecYEG preprotein conducting channel. Has a central role in coupling the hydrolysis of ATP to the transfer of proteins into and across the cell membrane, serving both as a receptor for the preprotein-SecB complex and as an ATP-driven molecular motor driving the stepwise translocation of polypeptide chains across the membrane. In Acinetobacter baylyi (strain ATCC 33305 / BD413 / ADP1), this protein is Protein translocase subunit SecA.